Here is a 22-residue protein sequence, read N- to C-terminus: Fuctinin-1 (22 aa).

Positions 1–22 (SASPGLPKGEKEQQEAIEHIDE) are disordered. Positions 8–22 (KGEKEQQEAIEHIDE) are enriched in basic and acidic residues.

To human SET/PHAPII protein. In terms of assembly, oligomer.

Its subcellular location is the cytoplasm. In terms of biological role, has a role in the physiological regulation of fucosylation processes. The chain is Fuctinin-1 from Rattus norvegicus (Rat).